Reading from the N-terminus, the 337-residue chain is Receptor like protein kinase S.3 (337 aa).

Residues 50 to 316 (FKESELFGTE…VNYLEGNDVL (267 aa)) form the Protein kinase domain. Residues 56–64 (FGTEANGTV) and lysine 78 each bind ATP. The residue at position 123 (tyrosine 123) is a Phosphotyrosine. Aspartate 171 serves as the catalytic Proton acceptor.

It belongs to the protein kinase superfamily. Ser/Thr protein kinase family.

It catalyses the reaction L-seryl-[protein] + ATP = O-phospho-L-seryl-[protein] + ADP + H(+). The catalysed reaction is L-threonyl-[protein] + ATP = O-phospho-L-threonyl-[protein] + ADP + H(+). This is Receptor like protein kinase S.3 (LECRKS3) from Arabidopsis thaliana (Mouse-ear cress).